Reading from the N-terminus, the 258-residue chain is Sec-independent protein translocase protein TatC (258 aa).

The Cytoplasmic portion of the chain corresponds to 2-23 (SVEDTQPLITHLIELRKRLLNC). The helical transmembrane segment at 24–44 (IISVIVIFLCLVYFANDIYHL) threads the bilayer. Topologically, residues 45–75 (VSAPLIKQLPQGSTMIATDVASPFFTPIKLT) are periplasmic. A helical transmembrane segment spans residues 76–96 (FMVSLILSAPVILYQVWAFIA). Over 97 to 115 (PALYKHERRLVVPLLVSSS) the chain is Cytoplasmic. The helical transmembrane segment at 116–136 (LLFYIGMAFAYFVVFPLAFGF) threads the bilayer. The Periplasmic segment spans residues 137-156 (LANTAPEGVQVSTDIASYLS). The chain crosses the membrane as a helical span at residues 157–177 (FVMALFMAFGVSFEVPVAIVL). Topologically, residues 178 to 192 (LCWMGITSPEDLRKK) are cytoplasmic. The helical transmembrane segment at 193 to 210 (RPYVLVGAFVVGMLLTPP) threads the bilayer. Asp211 is a topological domain (periplasmic). A helical membrane pass occupies residues 212 to 232 (VFSQTLLAIPMYCLFEIGVFF). Over 233–258 (SRFYVGKGRNREEENDAEAESEKTEE) the chain is Cytoplasmic.

Belongs to the TatC family. The Tat system comprises two distinct complexes: a TatABC complex, containing multiple copies of TatA, TatB and TatC subunits, and a separate TatA complex, containing only TatA subunits. Substrates initially bind to the TatABC complex, which probably triggers association of the separate TatA complex to form the active translocon.

Its subcellular location is the cell inner membrane. Its function is as follows. Part of the twin-arginine translocation (Tat) system that transports large folded proteins containing a characteristic twin-arginine motif in their signal peptide across membranes. Together with TatB, TatC is part of a receptor directly interacting with Tat signal peptides. The chain is Sec-independent protein translocase protein TatC from Escherichia coli O6:H1 (strain CFT073 / ATCC 700928 / UPEC).